We begin with the raw amino-acid sequence, 127 residues long: Large ribosomal subunit protein bL12 (127 aa).

This sequence belongs to the bacterial ribosomal protein bL12 family. As to quaternary structure, homodimer. Part of the ribosomal stalk of the 50S ribosomal subunit. Forms a multimeric L10(L12)X complex, where L10 forms an elongated spine to which 2 to 4 L12 dimers bind in a sequential fashion. Binds GTP-bound translation factors.

Its function is as follows. Forms part of the ribosomal stalk which helps the ribosome interact with GTP-bound translation factors. Is thus essential for accurate translation. This chain is Large ribosomal subunit protein bL12, found in Bordetella bronchiseptica (strain ATCC BAA-588 / NCTC 13252 / RB50) (Alcaligenes bronchisepticus).